The primary structure comprises 687 residues: DNA-directed RNA polymerase subunit beta' (687 aa).

Residues Cys-69, Cys-71, Cys-87, and Cys-90 each coordinate Zn(2+). Asp-491, Asp-493, and Asp-495 together coordinate Mg(2+).

Belongs to the RNA polymerase beta' chain family. RpoC1 subfamily. In plastids the minimal PEP RNA polymerase catalytic core is composed of four subunits: alpha, beta, beta', and beta''. When a (nuclear-encoded) sigma factor is associated with the core the holoenzyme is formed, which can initiate transcription. Requires Mg(2+) as cofactor. Zn(2+) serves as cofactor.

It is found in the plastid. It localises to the chloroplast. It carries out the reaction RNA(n) + a ribonucleoside 5'-triphosphate = RNA(n+1) + diphosphate. DNA-dependent RNA polymerase catalyzes the transcription of DNA into RNA using the four ribonucleoside triphosphates as substrates. In Glycine max (Soybean), this protein is DNA-directed RNA polymerase subunit beta'.